The primary structure comprises 552 residues: Glucose-6-phosphate isomerase (552 aa).

Residue Glu-357 is the Proton donor of the active site. Catalysis depends on residues His-388 and Lys-516. The tract at residues 525–552 is disordered; that stretch reads ELASTKPPKHDSSTNALIERYRTRGCRS.

Belongs to the GPI family.

It is found in the cytoplasm. The enzyme catalyses alpha-D-glucose 6-phosphate = beta-D-fructose 6-phosphate. The protein operates within carbohydrate biosynthesis; gluconeogenesis. It functions in the pathway carbohydrate degradation; glycolysis; D-glyceraldehyde 3-phosphate and glycerone phosphate from D-glucose: step 2/4. Catalyzes the reversible isomerization of glucose-6-phosphate to fructose-6-phosphate. The chain is Glucose-6-phosphate isomerase from Laribacter hongkongensis (strain HLHK9).